Reading from the N-terminus, the 603-residue chain is Pentatricopeptide repeat-containing protein At2g02980, chloroplastic (603 aa).

A chloroplast-targeting transit peptide spans 1–38; sequence MAISSASLISSFSHAETFTKHSKIDTVNTQNPILLISK. PPR repeat units follow at residues 93-127, 128-162, 163-193, 194-228, 229-263, 264-294, 295-329, 330-365, 366-400, and 432-466; these read DIVI…GILP, DNYT…GLDD, NVYV…IVEP, CVVC…YLKP, NEIT…SFCK, YVKV…MRYK, DTQA…NVQP, DEIT…GIVP, SIKH…PTPM, and HGGD…KAVK. Positions 401 to 476 are type E motif; sequence LWRILLAACS…VPGCSSIEVN (76 aa). Residues 477–507 form a type E(+) motif region; sequence NVVHEFFSGDGVKSATTKLHRALDEMVKELK. A type DYW motif region spans residues 508 to 603; it reads LSGYVPDTSM…DGKCSCGDFW (96 aa).

The protein belongs to the PPR family. PCMP-H subfamily.

Its subcellular location is the plastid. It localises to the chloroplast. Involved in RNA editing event in chloroplasts. Required for the editing of a single site in ndhD transcript, which is a plastid-encoded subunits of the chloroplast NAD(P)H dehydrogenase (NDH) complex. Not essential for the activity of the NDH complex of the photosynthetic electron transport chain. This chain is Pentatricopeptide repeat-containing protein At2g02980, chloroplastic (PCMP-H26), found in Arabidopsis thaliana (Mouse-ear cress).